The following is a 163-amino-acid chain: MADLYALTQQALAGMDVELVDVERAALGLLRVTIDKAGGVRIEDCEQVSRQLSRVYEVENIDYKRLEVGSPGVDRPLRTEAELRRFAGERIEIKLRQPLDGRKVFSGILSAPANDGAAADAQPAVFGLEFEAKKDDIQVLNFTLGDVERAKLDPVLDFKGKKR.

It belongs to the RimP family.

The protein localises to the cytoplasm. In terms of biological role, required for maturation of 30S ribosomal subunits. The polypeptide is Ribosome maturation factor RimP (Bordetella petrii (strain ATCC BAA-461 / DSM 12804 / CCUG 43448)).